The chain runs to 161 residues: Regulator of ribonuclease activity A (161 aa).

The protein belongs to the RraA family. As to quaternary structure, homotrimer. Binds to both RNA-binding sites in the C-terminal region of Rne and to RhlB.

Its subcellular location is the cytoplasm. Its function is as follows. Globally modulates RNA abundance by binding to RNase E (Rne) and regulating its endonucleolytic activity. Can modulate Rne action in a substrate-dependent manner by altering the composition of the degradosome. Modulates RNA-binding and helicase activities of the degradosome. In Klebsiella pneumoniae (strain 342), this protein is Regulator of ribonuclease activity A.